An 80-amino-acid chain; its full sequence is MRLIKLEQPNCNPCKMVSNYLEQVNIQFETVDVTQEPEVAARFGVMGVPVTILLSDQGEEVNRSVGFKPNELDELLKELR.

The region spanning 1–80 is the Thioredoxin domain; that stretch reads MRLIKLEQPN…ELDELLKELR (80 aa). Cysteine 11 and cysteine 14 are oxidised to a cystine.

This sequence belongs to the thioredoxin family.

In Bacillus subtilis (strain 168), this protein is SPbeta prophage-derived thioredoxin-like protein YosR (yosR).